Reading from the N-terminus, the 170-residue chain is NADPH-dependent 7-cyano-7-deazaguanine reductase (170 aa).

The Thioimide intermediate role is filled by Cys-58. The Proton donor role is filled by Asp-65. Residues 80–82 (VES) and 99–100 (HE) contribute to the substrate site.

Belongs to the GTP cyclohydrolase I family. QueF type 1 subfamily.

It localises to the cytoplasm. It catalyses the reaction 7-aminomethyl-7-carbaguanine + 2 NADP(+) = 7-cyano-7-deazaguanine + 2 NADPH + 3 H(+). Its pathway is tRNA modification; tRNA-queuosine biosynthesis. Functionally, catalyzes the NADPH-dependent reduction of 7-cyano-7-deazaguanine (preQ0) to 7-aminomethyl-7-deazaguanine (preQ1). This is NADPH-dependent 7-cyano-7-deazaguanine reductase from Bdellovibrio bacteriovorus (strain ATCC 15356 / DSM 50701 / NCIMB 9529 / HD100).